We begin with the raw amino-acid sequence, 300 residues long: MNQSYGRLVSRAAIAATAMASLLLLIKIFAWWYTGSVSILAALVDSLVDIGASLTNLLVVRYSLQPADDNHSFGHGKAESLAALAQSMFISGSALFLFLTGIQHLISPTPMIDPGVGVIVTIVALICTIILVSFQRWVVRRTQSQAVRADMLHYQSDVMMNGAILLALGLSWYGWHRADALFALGIGIYILYSALRMGYEAVQSLLDRALPDEERQEIIDIVTSWPGVSGAHDLRTRQSGPTRFIQIHLEMEDSLPLVQAHMVADQVEQAILRRFPGSDVIIHQDPCSVVPREGKRSMLS.

4 helical membrane passes run 12 to 32 (AAIA…FAWW), 39 to 59 (ILAA…NLLV), 82 to 102 (AALA…LTGI), and 114 to 134 (PGVG…LVSF). Residues Asp-45 and Asp-49 each contribute to the Zn(2+) site. Zn(2+) is bound by residues His-153 and Asp-157. 2 helical membrane-spanning segments follow: residues 156–176 (SDVM…YGWH) and 178–198 (ADAL…LRMG).

This sequence belongs to the cation diffusion facilitator (CDF) transporter (TC 2.A.4) family. FieF subfamily. In terms of assembly, homodimer.

The protein resides in the cell inner membrane. The catalysed reaction is Zn(2+)(in) + H(+)(out) = Zn(2+)(out) + H(+)(in). It catalyses the reaction Cd(2+)(in) + H(+)(out) = Cd(2+)(out) + H(+)(in). The enzyme catalyses Fe(2+)(in) + H(+)(out) = Fe(2+)(out) + H(+)(in). Divalent metal cation transporter which exports Zn(2+), Cd(2+) and possibly Fe(2+). May be involved in zinc and iron detoxification by efflux. This is Cation-efflux pump FieF from Shigella boydii serotype 18 (strain CDC 3083-94 / BS512).